The following is a 272-amino-acid chain: Shikimate dehydrogenase (NADP(+)) (272 aa).

Residues 14–16 (SKS) and Thr61 each bind shikimate. Lys65 serves as the catalytic Proton acceptor. The shikimate site is built by Asn86 and Asp102. Residues 126–130 (GAGGA), 149–154 (NRTFSK), Ser189, and Met213 each bind NADP(+). A shikimate-binding site is contributed by Tyr215. Residue Gly238 participates in NADP(+) binding.

This sequence belongs to the shikimate dehydrogenase family. As to quaternary structure, homodimer.

It carries out the reaction shikimate + NADP(+) = 3-dehydroshikimate + NADPH + H(+). It participates in metabolic intermediate biosynthesis; chorismate biosynthesis; chorismate from D-erythrose 4-phosphate and phosphoenolpyruvate: step 4/7. Its function is as follows. Involved in the biosynthesis of the chorismate, which leads to the biosynthesis of aromatic amino acids. Catalyzes the reversible NADPH linked reduction of 3-dehydroshikimate (DHSA) to yield shikimate (SA). The sequence is that of Shikimate dehydrogenase (NADP(+)) from Haemophilus influenzae (strain ATCC 51907 / DSM 11121 / KW20 / Rd).